A 488-amino-acid polypeptide reads, in one-letter code: Protein Notchless (488 aa).

Residues Met-1–Ile-22 are disordered. Residues Pro-19–Ala-101 are ubiquitin-like (UBL) domain. WD repeat units follow at residues Gly-117–Thr-156, Gly-159–Arg-198, Gly-202–Asn-246, Gly-249–Thr-287, Leu-329–Arg-370, Gly-373–Thr-412, Gly-415–Glu-454, and Gly-457–Tyr-488.

The protein belongs to the NLE1/RSA4 family. In terms of assembly, interacts with Notch (via cytoplasmic domain). Associates with the pre-60S ribosomal particle.

The protein localises to the nucleus. It localises to the nucleolus. Its function is as follows. Plays a role in regulating Notch activity. This chain is Protein Notchless, found in Drosophila melanogaster (Fruit fly).